The chain runs to 108 residues: Class I hydrophobin 3 (108 aa).

The signal sequence occupies residues 1-17; sequence MFFQTTIVAALAFLAVA. 4 disulfides stabilise this stretch: cysteine 28-cysteine 87, cysteine 35-cysteine 81, cysteine 36-cysteine 69, and cysteine 88-cysteine 101. Residue asparagine 37 is glycosylated (N-linked (GlcNAc...) asparagine).

This sequence belongs to the fungal hydrophobin family. In terms of assembly, self-assembles to form functional amyloid fibrils called rodlets. Self-assembly into fibrillar rodlets occurs spontaneously at hydrophobic:hydrophilic interfaces and the rodlets further associate laterally to form amphipathic monolayers.

It is found in the secreted. The protein resides in the cell wall. Aerial growth, conidiation, and dispersal of filamentous fungi in the environment rely upon a capability of their secreting small amphipathic proteins called hydrophobins (HPBs) with low sequence identity. Class I can self-assemble into an outermost layer of rodlet bundles on aerial cell surfaces, conferring cellular hydrophobicity that supports fungal growth, development and dispersal; whereas Class II form highly ordered films at water-air interfaces through intermolecular interactions but contribute nothing to the rodlet structure. Vmh3 is a class I hydrophobin that is essential for the maintenance of the surface hydrophobicity of the mycelium and might be involved in the development of fruiting bodies. Plays an important role in hyphal resistance against environmental stress. Necessary for the efficient biodegradation of lignin. The sequence is that of Class I hydrophobin 3 from Pleurotus ostreatus (Oyster mushroom).